A 538-amino-acid chain; its full sequence is Pyruvate kinase (538 aa).

S45 carries the post-translational modification Phosphoserine. R72 is a substrate binding site. Residues N74, S76, D107, and T108 each coordinate K(+). 74–77 (NFSH) contributes to the ATP binding site. Residues R114 and K200 each contribute to the ATP site. Residue E265 participates in Mg(2+) binding. 3 residues coordinate substrate: G288, D289, and T321. D289 lines the Mg(2+) pocket.

The protein belongs to the pyruvate kinase family. As to quaternary structure, homotetramer. Mg(2+) serves as cofactor. The cofactor is K(+).

It carries out the reaction pyruvate + ATP = phosphoenolpyruvate + ADP + H(+). It functions in the pathway carbohydrate degradation; glycolysis; pyruvate from D-glyceraldehyde 3-phosphate: step 5/5. The polypeptide is Pyruvate kinase (pki1) (Hypocrea jecorina (Trichoderma reesei)).